We begin with the raw amino-acid sequence, 1194 residues long: Multidrug efflux ATP-binding/permease protein Rv0194 (1194 aa).

6 consecutive transmembrane segments (helical) span residues 20–40, 56–76, 130–150, 153–173, 258–278, and 279–299; these read LLLGFGAALAGTVIAVLVPLV, LAPWAVVLVAAAGATYLLMYV, LLFDVPNVLRHVLTLLLGVAV, WLSVPLALLAVLLVPVIGLIA, FALGGWMAAQGSITVGTFVAF, and WACLTLLARPACDLAGMLTIA. Residues 21-301 enclose the ABC transmembrane type-1 1 domain; the sequence is LLGFGAALAG…LAGMLTIAQQ (281 aa). One can recognise an ABC transporter 1 domain in the interval 334 to 568; that stretch reads LEFQRVSFGY…CPRYRELLSP (235 aa). 367–374 serves as a coordination point for ATP; that stretch reads GAPGSGKS. 6 helical membrane-spanning segments follow: residues 628–648, 660–680, 743–763, 765–785, 847–867, and 878–898; these read ALSLLLVAVQTCAGLLPPLLI, VLSALWWAALAGTATVVIRWV, LVVAVISVVTLVGILVALLAI, ARLVLLIFTTMPVLALATWQF, LLALYYPFVALLCSLATTLVL, and VISVGALVTYLLYIELLYTPI. The ABC transmembrane type-1 2 domain occupies 628-910; the sequence is ALSLLLVAVQ…LAQMFDDYQR (283 aa). An ABC transporter 2 domain is found at 942 to 1177; the sequence is VVFDAVHYSY…GGHYSRLWAA (236 aa). 976–983 lines the ATP pocket; that stretch reads GSTGSGKS.

It belongs to the ABC transporter superfamily. Lipid exporter (TC 3.A.1.106) family.

It localises to the cell inner membrane. Efflux is inhibited by reserpine. Its function is as follows. Overexpression in M.smegmatis increases resistance to erythromycin, ampicillin, novobiocin and vancomycin. It also reduces accumulation of ethidium bromide in the cell. The chain is Multidrug efflux ATP-binding/permease protein Rv0194 from Mycobacterium tuberculosis (strain ATCC 25618 / H37Rv).